The following is a 637-amino-acid chain: Probable polypeptide N-acetylgalactosaminyltransferase 8 (637 aa).

At 1–6 (MMFWRK) the chain is on the cytoplasmic side. A helical; Signal-anchor for type II membrane protein membrane pass occupies residues 7–29 (LPKALFIGLTLAIAVNLLLVFSS). Residues 30-637 (KGTLQNLFTG…VRDWGQTNSQ (608 aa)) lie on the Lumenal side of the membrane. N-linked (GlcNAc...) asparagine glycosylation is found at Asn85, Asn107, and Asn160. 5 disulfides stabilise this stretch: Cys171–Cys404, Cys395–Cys474, Cys509–Cys525, Cys556–Cys571, and Cys599–Cys617. The catalytic subdomain A stretch occupies residues 180 to 294 (LPSLSVILIF…VGWAEPILAR (115 aa)). Positions 221 and 255 each coordinate substrate. Mn(2+)-binding residues include Asp278, His280, and His409. The segment at 351–412 (PVKSPSIMGI…PCSRIAHLER (62 aa)) is catalytic subdomain B. Positions 412 and 417 each coordinate substrate. The Ricin B-type lectin domain occupies 496 to 634 (GYGRMKNLLD…QHTVRDWGQT (139 aa)).

The protein belongs to the glycosyltransferase 2 family. GalNAc-T subfamily. It depends on Mn(2+) as a cofactor. As to expression, widely expressed. Expressed in heart, skeletal muscle, kidney, liver, small intestine and placenta. Weakly expressed in colon, thymus, spleen, lung and leukocyte.

It is found in the golgi apparatus membrane. It catalyses the reaction L-seryl-[protein] + UDP-N-acetyl-alpha-D-galactosamine = a 3-O-[N-acetyl-alpha-D-galactosaminyl]-L-seryl-[protein] + UDP + H(+). The catalysed reaction is L-threonyl-[protein] + UDP-N-acetyl-alpha-D-galactosamine = a 3-O-[N-acetyl-alpha-D-galactosaminyl]-L-threonyl-[protein] + UDP + H(+). Its pathway is protein modification; protein glycosylation. Functionally, probably catalyzes the initial reaction in O-linked oligosaccharide biosynthesis, the transfer of an N-acetyl-D-galactosamine residue to a serine or threonine residue on the protein receptor. The protein is Probable polypeptide N-acetylgalactosaminyltransferase 8 (GALNT8) of Homo sapiens (Human).